A 358-amino-acid chain; its full sequence is DNA polymerase IV (358 aa).

Residues 4–185 enclose the UmuC domain; it reads IIHVDMDCFY…LPLIKIPGVG (182 aa). The Mg(2+) site is built by D8 and D103. E104 is a catalytic residue.

The protein belongs to the DNA polymerase type-Y family. In terms of assembly, monomer. Mg(2+) serves as cofactor.

The protein localises to the cytoplasm. It catalyses the reaction DNA(n) + a 2'-deoxyribonucleoside 5'-triphosphate = DNA(n+1) + diphosphate. In terms of biological role, poorly processive, error-prone DNA polymerase involved in untargeted mutagenesis. Copies undamaged DNA at stalled replication forks, which arise in vivo from mismatched or misaligned primer ends. These misaligned primers can be extended by PolIV. Exhibits no 3'-5' exonuclease (proofreading) activity. May be involved in translesional synthesis, in conjunction with the beta clamp from PolIII. In Shewanella halifaxensis (strain HAW-EB4), this protein is DNA polymerase IV.